A 231-amino-acid polypeptide reads, in one-letter code: Large ribosomal subunit protein uL1 (231 aa).

Belongs to the universal ribosomal protein uL1 family. Part of the 50S ribosomal subunit.

In terms of biological role, binds directly to 23S rRNA. The L1 stalk is quite mobile in the ribosome, and is involved in E site tRNA release. Protein L1 is also a translational repressor protein, it controls the translation of the L11 operon by binding to its mRNA. The protein is Large ribosomal subunit protein uL1 of Clostridium kluyveri (strain NBRC 12016).